A 660-amino-acid chain; its full sequence is Secretin PulD (660 aa).

The first 27 residues, methionine 1 to alanine 27, serve as a signal peptide directing secretion. The tract at residues glutamate 28–glycine 124 is N0. Residues glutamate 126 to glycine 190 are N1. Residues aspartate 191 to alanine 264 form an N2 region. Residues glycine 267–aspartate 341 are N3. Positions glutamine 346–aspartate 596 are secretin. Residues aspartate 598–leucine 660 are s domain.

This sequence belongs to the bacterial secretin family. GSP D subfamily. Forms a cylindrical channel with 15 subunits.

The protein localises to the cell outer membrane. Its function is as follows. Involved in a type II secretion system (T2SS, formerly general secretion pathway, GSP) for the export of proteins. Required for the translocation of pullulanase. This subunit forms the outer membrane channel. The chain is Secretin PulD (pulD) from Klebsiella pneumoniae.